The chain runs to 376 residues: DNA methyltransferase CcrM (376 aa).

The RAMA domain maps to 273–370 (KATLSVMTGK…IDELRSVIRN (98 aa)).

The protein belongs to the N(4)/N(6)-methyltransferase family.

It carries out the reaction a 2'-deoxyadenosine in DNA + S-adenosyl-L-methionine = an N(6)-methyl-2'-deoxyadenosine in DNA + S-adenosyl-L-homocysteine + H(+). Functionally, a beta subtype methylase that recognizes the double-stranded sequence 5'-GANTC-3' and methylates A-2 on both strands. Overexpression leads to many branched and bloated cells, two to three times the size of wild-type cells, and cells that have 1-3 times the normal amount of DNA. Contributes to the accurate cell-cycle control of DNA replication and cellular morphology. Can fully replace its ortholog in C.crescentus. The polypeptide is DNA methyltransferase CcrM (smeIM) (Rhizobium meliloti (strain 1021) (Ensifer meliloti)).